Reading from the N-terminus, the 82-residue chain is Cytochrome b559 subunit alpha (82 aa).

Residues 22 to 36 form a helical membrane-spanning segment; it reads VIHAITLPSIFLAGF. His24 contributes to the heme binding site.

It belongs to the PsbE/PsbF family. Heterodimer of an alpha subunit and a beta subunit. PSII is composed of 1 copy each of membrane proteins PsbA, PsbB, PsbC, PsbD, PsbE, PsbF, PsbH, PsbI, PsbJ, PsbK, PsbL, PsbM, PsbT, PsbX, PsbY, PsbZ, Psb30/Ycf12, peripheral proteins PsbO, CyanoQ (PsbQ), PsbU, PsbV and a large number of cofactors. It forms dimeric complexes. Heme b serves as cofactor.

It localises to the cellular thylakoid membrane. Functionally, this b-type cytochrome is tightly associated with the reaction center of photosystem II (PSII). PSII is a light-driven water:plastoquinone oxidoreductase that uses light energy to abstract electrons from H(2)O, generating O(2) and a proton gradient subsequently used for ATP formation. It consists of a core antenna complex that captures photons, and an electron transfer chain that converts photonic excitation into a charge separation. This chain is Cytochrome b559 subunit alpha, found in Synechococcus sp. (strain CC9311).